The chain runs to 520 residues: MAPVALLSVSDKSGLVPLAEALHRTHGYQLLSSGGTAKVLEQAGLPVTRVSDHTGAPEILGGRVKTLHPRVHGGILAKRGDASHQADLEQQNIAPIDMVVVNLYPFRETIARPDVTWDQAIENIDIGGPAMVRAAAKNHADVAVLTSPDQYDRLLTAMAESGGSVPSALRRQLALEAFNHTASYDTAIGRWMAEQATAKGCPWLEAVPLRQTLRYGENPHQKARWFSHPKQGWGGAIQLQGKELSTNNLLDLEAALATVREFGYGADGSAPASQPAAVVVKHTNPCGVAVGASMPAALTRALDADRVSAFGGIIAMNDVVEATAARELTSLFLECVVAPGFTPEAREVLAAKANLRLLELAPQAIDVAGPDHVRSILGGLLVQDLDDQAITPTDWTVASQRPPTPQEKLDLEFAWRLVRHVRSNAIVVAKDGQSLGVGAGQMNRVGSARIALEAAGEKAQGAVLASDGFFPFDDTVRLAASQGITAVIHPGGSMRDGDSIKACDELGLAMQLTGRRHFLH.

Residues 1-146 (MAPVALLSVS…KNHADVAVLT (146 aa)) enclose the MGS-like domain.

This sequence belongs to the PurH family.

It carries out the reaction (6R)-10-formyltetrahydrofolate + 5-amino-1-(5-phospho-beta-D-ribosyl)imidazole-4-carboxamide = 5-formamido-1-(5-phospho-D-ribosyl)imidazole-4-carboxamide + (6S)-5,6,7,8-tetrahydrofolate. It catalyses the reaction IMP + H2O = 5-formamido-1-(5-phospho-D-ribosyl)imidazole-4-carboxamide. It functions in the pathway purine metabolism; IMP biosynthesis via de novo pathway; 5-formamido-1-(5-phospho-D-ribosyl)imidazole-4-carboxamide from 5-amino-1-(5-phospho-D-ribosyl)imidazole-4-carboxamide (10-formyl THF route): step 1/1. Its pathway is purine metabolism; IMP biosynthesis via de novo pathway; IMP from 5-formamido-1-(5-phospho-D-ribosyl)imidazole-4-carboxamide: step 1/1. This Synechococcus sp. (strain CC9605) protein is Bifunctional purine biosynthesis protein PurH.